A 1305-amino-acid chain; its full sequence is Serine protease EspC (1305 aa).

The N-terminal stretch at 1 to 53 (MNKIYALKYCHATGGLIAVSELASRVMKKAARGSLLALFNLSLYGAFLSASQA) is a signal peptide. A Peptidase S6 domain is found at 55–297 (QLNIDNVWAR…SILNQYDENT (243 aa)). Catalysis depends on charge relay system residues His125, Asp153, and Ser256. Residues 1039–1305 (DTQGDAGVWA…AINANFRYSF (267 aa)) form the Autotransporter domain.

Cleaved to release the mature protein from the outer membrane.

Its subcellular location is the periplasm. It is found in the secreted. The protein localises to the cell surface. The protein resides in the cell outer membrane. Inhibition of cytotoxic activity by phenylmethylsulfonyl fluoride. Serine protease with enterotoxic and cytotoxic activities. Cleaves fodrin, but does not cause its redistribution within epithelial cells. The exact role of EspC in EPEC pathogenesis is still unknown. This chain is Serine protease EspC (espC), found in Escherichia coli O127:H6 (strain E2348/69 / EPEC).